A 489-amino-acid chain; its full sequence is Bifunctional protein HldE (489 aa).

The interval 1–330 (MFDFDGLSNA…RKILPPAFLA (330 aa)) is ribokinase. 205 to 208 (NRKE) is a binding site for ATP. D275 is an active-site residue. The tract at residues 358–489 (FTNGCFDILH…SLVKRAGGRA (132 aa)) is cytidylyltransferase.

It in the N-terminal section; belongs to the carbohydrate kinase PfkB family. This sequence in the C-terminal section; belongs to the cytidylyltransferase family. As to quaternary structure, homodimer.

The catalysed reaction is D-glycero-beta-D-manno-heptose 7-phosphate + ATP = D-glycero-beta-D-manno-heptose 1,7-bisphosphate + ADP + H(+). The enzyme catalyses D-glycero-beta-D-manno-heptose 1-phosphate + ATP + H(+) = ADP-D-glycero-beta-D-manno-heptose + diphosphate. It participates in nucleotide-sugar biosynthesis; ADP-L-glycero-beta-D-manno-heptose biosynthesis; ADP-L-glycero-beta-D-manno-heptose from D-glycero-beta-D-manno-heptose 7-phosphate: step 1/4. Its pathway is nucleotide-sugar biosynthesis; ADP-L-glycero-beta-D-manno-heptose biosynthesis; ADP-L-glycero-beta-D-manno-heptose from D-glycero-beta-D-manno-heptose 7-phosphate: step 3/4. Functionally, catalyzes the phosphorylation of D-glycero-D-manno-heptose 7-phosphate at the C-1 position to selectively form D-glycero-beta-D-manno-heptose-1,7-bisphosphate. In terms of biological role, catalyzes the ADP transfer from ATP to D-glycero-beta-D-manno-heptose 1-phosphate, yielding ADP-D-glycero-beta-D-manno-heptose. The polypeptide is Bifunctional protein HldE (Nitrobacter hamburgensis (strain DSM 10229 / NCIMB 13809 / X14)).